Consider the following 234-residue polypeptide: Large ribosomal subunit protein uL1c (234 aa).

It belongs to the universal ribosomal protein uL1 family. Part of the 50S ribosomal subunit.

It localises to the plastid. Its subcellular location is the chloroplast. Binds directly to 23S rRNA. Might be involved in E site tRNA release (Potential). The polypeptide is Large ribosomal subunit protein uL1c (rpl1) (Guillardia theta (Cryptophyte)).